We begin with the raw amino-acid sequence, 337 residues long: Probable arabinose 5-phosphate isomerase (337 aa).

The SIS domain maps to 58–201 (VIDLILACEG…AVSLITARNF (144 aa)). Substrate is bound by residues 92–93 (GT), H99, H105, 131–140 (KLIPSLKNFG), 165–167 (TVE), T237, and D290. H99 serves as a coordination point for Zn(2+). The 58-residue stretch at 227–284 (MQTRLPTILPTTNFTDCLTVMNEGRMGVALVMENEQLKGIITDGDIRRALTANGAGTL) folds into the CBS 1 domain. Residues 292 to 337 (MTSSPKTIHQDEFLSKAEDFMKAKKIHSLVVVNDENHVVGLVEFSS) enclose the CBS 2 domain.

It belongs to the SIS family. GutQ/KpsF subfamily.

It carries out the reaction D-arabinose 5-phosphate = D-ribulose 5-phosphate. Its function is as follows. Catalyzes the reversible aldol-ketol isomerization between D-ribulose 5-phosphate (Ru5P) and D-arabinose 5-phosphate (A5P). The sequence is that of Probable arabinose 5-phosphate isomerase from Haemophilus influenzae (strain ATCC 51907 / DSM 11121 / KW20 / Rd).